A 279-amino-acid polypeptide reads, in one-letter code: Protein K1 (279 aa).

The first 18 residues, 1 to 18, serve as a signal peptide directing secretion; the sequence is MFLYVVCSLAVCFRGLLS. The Extracellular portion of the chain corresponds to 19–220; the sequence is LSLQSSPNLC…TYLYIQEHLL (202 aa). Residues 221-241 traverse the membrane as a helical segment; it reads VFMTLVALIGTMCGILGTIIF. At 242–279 the chain is on the cytoplasmic side; it reads AHCQKQRDSNKTVPQQLQDYYSLHDLCTEDYTQPVDWY.

In terms of assembly, homooligomer.

It localises to the host membrane. Functionally, promotes host cell survival pathways and may contribute to pathogenesis by preventing infected cells from undergoing apoptosis. Acts in host B-cells by mimicking the activated B-cell receptor complex. The cytoplasmic tail of K1 can induce the phosphorylation of a number of different kinases, leading to the activation of survival signaling pathways. In Human herpesvirus 8 type P (isolate GK18) (HHV-8), this protein is Protein K1 (K1).